A 294-amino-acid polypeptide reads, in one-letter code: Acetyl-coenzyme A carboxylase carboxyl transferase subunit beta (294 aa).

The region spanning 29–294 (LWEKCPECGQ…TQVVKLQTNA (266 aa)) is the CoA carboxyltransferase N-terminal domain. Residues Cys-33, Cys-36, Cys-52, and Cys-55 each coordinate Zn(2+). The C4-type zinc finger occupies 33-55 (CPECGQVVYRKDLIDNCSVCSNC).

Belongs to the AccD/PCCB family. In terms of assembly, acetyl-CoA carboxylase is a heterohexamer composed of biotin carboxyl carrier protein (AccB), biotin carboxylase (AccC) and two subunits each of ACCase subunit alpha (AccA) and ACCase subunit beta (AccD). Zn(2+) is required as a cofactor.

It localises to the cytoplasm. The catalysed reaction is N(6)-carboxybiotinyl-L-lysyl-[protein] + acetyl-CoA = N(6)-biotinyl-L-lysyl-[protein] + malonyl-CoA. The protein operates within lipid metabolism; malonyl-CoA biosynthesis; malonyl-CoA from acetyl-CoA: step 1/1. Its function is as follows. Component of the acetyl coenzyme A carboxylase (ACC) complex. Biotin carboxylase (BC) catalyzes the carboxylation of biotin on its carrier protein (BCCP) and then the CO(2) group is transferred by the transcarboxylase to acetyl-CoA to form malonyl-CoA. The polypeptide is Acetyl-coenzyme A carboxylase carboxyl transferase subunit beta (Prochlorococcus marinus (strain NATL2A)).